The following is a 2530-amino-acid chain: Cullin-9 (2530 aa).

Lys87 is covalently cross-linked (Glycyl lysine isopeptide (Lys-Gly) (interchain with G-Cter in ubiquitin)). Positions 367-440 (RSEFSSRSGY…HWHMLEILGP (74 aa)) constitute a CPH domain. 2 disordered regions span residues 585-639 (LPSS…KAQS) and 930-951 (RGSP…GSPE). Over residues 940-949 (TPSTQGQDGS) the composition is skewed to polar residues. At Ser978 the chain carries Phosphoserine. The DOC domain occupies 1145 to 1324 (PITIPFFDVF…RTCLFYTIRA (180 aa)). 1365 to 1372 (AAQALGKT) contacts ATP. 2 disordered regions span residues 1435 to 1468 (EAPP…TPVC) and 1667 to 1690 (GDQE…GREL). Ser1459 is modified (phosphoserine). Lys1884 is covalently cross-linked (Glycyl lysine isopeptide (Lys-Gly) (interchain with G-Cter in NEDD8)). The segment at 2070–2287 (RPDQCPVCVT…KDYYNCSAMV (218 aa)) is TRIAD supradomain. Residues Cys2074, Cys2077, Cys2092, His2094, Cys2097, Cys2100, Cys2119, Cys2124, Cys2164, Cys2170, Cys2185, Cys2188, Cys2193, Cys2196, His2202, Cys2207, Cys2240, and Cys2243 each coordinate Zn(2+). The segment at 2074–2124 (CPVCVTPLGPHDDSPSLCCLHCCCKSCWNEYLTTRIEQNFVLNCTCPIADC) adopts an RING-type 1 zinc-finger fold. An IBR-type zinc finger spans residues 2144–2207 (SKYEKALLRG…FPEAHYPASC (64 aa)). Residues 2240-2269 (CPSCQAPIEKNEGCLHMTCARCNHGFCWRC) form an RING-type 2; atypical zinc finger. Residue Cys2253 is part of the active site. 6 residues coordinate Zn(2+): Cys2258, Cys2261, Cys2266, Cys2269, His2277, and Cys2283. Ser2440 carries the post-translational modification Phosphoserine. A disordered region spans residues 2443–2530 (VETREVKGSN…DEDEDDESYD (88 aa)). Residues 2452–2462 (NVPSDQPQGSS) are compositionally biased toward polar residues. The stretch at 2459-2500 (QGSSGLEVEDEEEEEEEEEEEEEEEEEDVPEWQHEFDEELDN) forms a coiled coil. 2 stretches are compositionally biased toward acidic residues: residues 2465–2510 (EVED…EESE) and 2520–2530 (GDEDEDDESYD).

It belongs to the cullin family. In terms of assembly, component of a Cul9-RING complex consisting of CUL9 and RBX1; the CUL9-RBX1 complex is a heterododecamer composed of six CUL9 and six RBX1 protomers. Interacts (via C-terminal TRIAD/RBR supradomain) with E2 ubiquitin-conjugating enzyme UBE2L3. Interacts with CUL7; the interaction with the CUL7 component of the 3M complex leads to inhibition of CUL9 activity. The CUL7-CUL9 heterodimer seems to interact specifically with TP53, likely via the CPH domain. Forms a complex with p53/TP53 in the cytoplasm of unstressed cells. Interacts with UBCH7 and UBCH8. In terms of processing, autoubiquitinated by the CUL9-RBX1 complex at Lys-87. Neddylated. Neddylation is mediated by E1 enzyme UBA3-NAE1 complex and E2 enzyme UBE2F. Structural rearrangment of the C-terminal TRIAD/RBR supradomain may play a role in neddylation and deneddylation.

Its subcellular location is the cytoplasm. Its function is as follows. Core component of the Cul9-RING ubiquitin-protein ligase complex composed of CUL9 and RBX1. The CUL9-RBX1 complex mediates ubiquitination and subsequent degradation of BIRC5 and is required to maintain microtubule dynamics and genome integrity. Acts downstream of the 3M complex, which inhibits CUL9 activity and the ubiquitination of BIRC5. The CUL9-RBX1 complex also mediates mono-ubiquitination of p53/TP53. Acts as a cytoplasmic anchor protein in p53/TP53-associated protein complex. Regulates the subcellular localization of p53/TP53 and its subsequent function. Ubiquitinates apurinic/apyrimidinic endodeoxyribonuclease APEX2. Ubiquitination by the CUL9-RBX1 complex is predominantly mediated by E2 ubiquitin-conjugating enzymes UBE2L3 and UBE2D2. The polypeptide is Cullin-9 (Cul9) (Mus musculus (Mouse)).